Reading from the N-terminus, the 761-residue chain is Complement factor B (761 aa).

The first 25 residues, 1–25 (MGIGHNPRLCLVPLILGLLCGGVGM), serve as a signal peptide directing secretion. 3 consecutive Sushi domains span residues 35–100 (SPCS…ECKA), 101–160 (IRCP…ICDD), and 163–220 (TYCP…SCQD). 6 disulfides stabilise this stretch: Cys-37-Cys-76, Cys-62-Cys-98, Cys-103-Cys-145, Cys-131-Cys-158, Cys-165-Cys-205, and Cys-191-Cys-218. N-linked (GlcNAc...) asparagine glycosylation is found at Asn-122 and Asn-142. The VWFA domain occupies 270–469 (NIYLVLDGSD…NLEDVFVQML (200 aa)). Mg(2+) contacts are provided by Ser-278 and Ser-280. An N-linked (GlcNAc...) asparagine glycan is attached at Asn-285. Mg(2+) is bound at residue Thr-353. N-linked (GlcNAc...) asparagine glycosylation occurs at Asn-378. Residues 477–754 (LCGMVWEHKD…VLPWLKEKLQ (278 aa)) enclose the Peptidase S1 domain. Cystine bridges form between Cys-478/Cys-596, Cys-511/Cys-527, Cys-599/Cys-615, Cys-656/Cys-682, and Cys-695/Cys-725. Catalysis depends on charge relay system residues His-526 and Asp-576. Ser-699 serves as the catalytic Charge relay system.

This sequence belongs to the peptidase S1 family. As to quaternary structure, monomer. Interacts with complement C3b; this interaction is dependent on the presence of Mg(2+). Catalytic component of the C3 convertase of the alternative complement pathway, also named C3bBb, composed of complement factor B Bb and complement C3b. Catalytic component of the C5 convertase of the alternative complement pathway, also named C3bBb3b, composed of complement factor B Bb and additional molecules of complement C3b. Interacts to CFP; this interaction contributes to the stabilization of the active C3-convertase enzyme complex. Mg(2+) serves as cofactor. The cofactor is Mn(2+). Post-translationally, cleaved by CFD following activation of the alternative complement system, generating Ba and Bb chains. Cleavage and activation takes place when CFB is already associated with complement C3b.

Its subcellular location is the secreted. The protein localises to the cell surface. It carries out the reaction Cleavage of Arg-|-Ser bond in complement component C3 alpha-chain to yield C3a and C3b, and Arg-|-Xaa bond in complement component C5 alpha-chain to yield C5a and C5b.. Its function is as follows. Precursor of the catalytic component of the C3 and C5 convertase complexes of the alternative pathway of the complement system, a cascade of proteins that leads to phagocytosis and breakdown of pathogens and signaling that strengthens the adaptive immune system. The alternative complement pathway acts as an amplification loop that enhances other complement pathways (classical, lectin and GZMK) by promoting formation of additional C3 and C5 convertases. CFB is cleaved and activated by CFD to generate Ba and Bb chains; Bb chain constituting the catalytic component of the C3 and C5 convertases. In terms of biological role, serine protease component of the complement C3 and C5 convertase complexes of the alternative complement pathway. Following cleavage and activation by factor D (CFD), forms the C3 convertase together with complement C3b. As part of the C3 convertase, cleaves and activates C3 into C3a anaphylatoxin and C3b opsonin, the next components of the complement pathways. When an additional complement C3b molecule binds to the C3 convertase, forms the C5 convertase, which cleaves and activates C5 into C5a anaphylatoxin and C5b component of the membrane attack complex. Involved in proliferation and differentiation of preactivated B-lymphocytes, rapid spreading of peripheral blood monocytes, stimulation of lymphocyte blastogenesis and lysis of erythrocytes. The polypeptide is Complement factor B (CFB) (Bos taurus (Bovine)).